The sequence spans 56 residues: Large ribosomal subunit protein bL33 (56 aa).

It belongs to the bacterial ribosomal protein bL33 family.

This chain is Large ribosomal subunit protein bL33, found in Helicobacter hepaticus (strain ATCC 51449 / 3B1).